Here is a 253-residue protein sequence, read N- to C-terminus: Imidazole glycerol phosphate synthase subunit HisF (253 aa).

Residues D11 and D130 contribute to the active site.

It belongs to the HisA/HisF family. As to quaternary structure, heterodimer of HisH and HisF.

It localises to the cytoplasm. It catalyses the reaction 5-[(5-phospho-1-deoxy-D-ribulos-1-ylimino)methylamino]-1-(5-phospho-beta-D-ribosyl)imidazole-4-carboxamide + L-glutamine = D-erythro-1-(imidazol-4-yl)glycerol 3-phosphate + 5-amino-1-(5-phospho-beta-D-ribosyl)imidazole-4-carboxamide + L-glutamate + H(+). It functions in the pathway amino-acid biosynthesis; L-histidine biosynthesis; L-histidine from 5-phospho-alpha-D-ribose 1-diphosphate: step 5/9. In terms of biological role, IGPS catalyzes the conversion of PRFAR and glutamine to IGP, AICAR and glutamate. The HisF subunit catalyzes the cyclization activity that produces IGP and AICAR from PRFAR using the ammonia provided by the HisH subunit. The chain is Imidazole glycerol phosphate synthase subunit HisF from Clostridium botulinum (strain Kyoto / Type A2).